We begin with the raw amino-acid sequence, 465 residues long: Cysteine--tRNA ligase (465 aa).

A Zn(2+)-binding site is contributed by C27. Residues 29–39 (PTVYDEVHIGH) carry the 'HIGH' region motif. C204, H229, and E233 together coordinate Zn(2+). The 'KMSKS' region signature appears at 261-265 (KMSKS). K264 is a binding site for ATP.

This sequence belongs to the class-I aminoacyl-tRNA synthetase family. Zn(2+) is required as a cofactor.

The protein resides in the cytoplasm. It carries out the reaction tRNA(Cys) + L-cysteine + ATP = L-cysteinyl-tRNA(Cys) + AMP + diphosphate. The chain is Cysteine--tRNA ligase from Metallosphaera sedula (strain ATCC 51363 / DSM 5348 / JCM 9185 / NBRC 15509 / TH2).